Reading from the N-terminus, the 946-residue chain is Inter-alpha-trypsin inhibitor heavy chain H2 (946 aa).

Residues 1–18 form the signal peptide; sequence MKRLTCFFICFFLSEVSG. A propeptide spanning residues 19-54 is cleaved from the precursor; it reads FEIPINGLSEFVDYEDLVELAPGKFQLVAENRRYQR. The VIT domain maps to 56–185; the sequence is LPGESEEMME…KVQFELHYQE (130 aa). Residue Ser-60 is modified to Phosphoserine; by FAM20C. An N-linked (GlcNAc...) (complex) asparagine glycan is attached at Asn-118. Cys-261 and Cys-264 are oxidised to a cystine. 4-carboxyglutamate occurs at positions 282 and 283. Residues 308–468 enclose the VWFA domain; the sequence is PKNILFVIDV…YDFLKRLSNE (161 aa). N-linked (GlcNAc...) asparagine glycosylation occurs at Asn-445. Position 466 is a phosphoserine; by FAM20C (Ser-466). Cysteines 650 and 651 form a disulfide. Residues 665–679 are O-glycosylated at three sites; it reads STPSWANPSPTPVIS. Thr-666 carries an O-linked (GalNAc...) threonine; partial glycan. Ser-673 carries an O-linked (GalNAc...) serine glycan. 2 O-linked (GalNAc...) threonine glycosylation sites follow: Thr-675 and Thr-691. Residue Asp-702 is modified to Aspartate 1-(chondroitin 4-sulfate)-ester. Residues 703 to 946 constitute a propeptide that is removed on maturation; that stretch reads PHFIIYLPKS…PQLYSFLKRP (244 aa). Ser-886 bears the Phosphoserine; by FAM20C mark.

As to quaternary structure, I-alpha-I plasma protease inhibitors are assembled from one or two heavy chains (HC) and one light chain, bikunin. Inter-alpha-inhibitor (I-alpha-I) is composed of ITIH1/HC1, ITIH2/HC2 and bikunin. Post-translationally, heavy chains are linked to bikunin via chondroitin 4-sulfate esterified to the alpha-carboxyl of the C-terminal aspartate after propeptide cleavage. N- and O-glycosylated. O-glycosylated with core 1 or possibly core 8 glycans. In terms of processing, phosphorylated by FAM20C in the extracellular medium. As to expression, plasma.

It localises to the secreted. In terms of biological role, may act as a carrier of hyaluronan in serum or as a binding protein between hyaluronan and other matrix protein, including those on cell surfaces in tissues to regulate the localization, synthesis and degradation of hyaluronan which are essential to cells undergoing biological processes. This Homo sapiens (Human) protein is Inter-alpha-trypsin inhibitor heavy chain H2 (ITIH2).